The following is a 399-amino-acid chain: Telomeric repeat-binding factor 2-interacting protein 1 (399 aa).

An N-acetylalanine modification is found at alanine 2. 2 positions are modified to phosphoserine: serine 36 and serine 43. The BRCT domain maps to 78–101 (FISTQYILDCVERNERLELEAYRL). The tract at residues 104 to 132 (ASAADTGSEAKPGALAEGAAEPEPQRHAG) is disordered. The segment covering 112-125 (EAKPGALAEGAAEP) has biased composition (low complexity). Lysine 114 is covalently cross-linked (Glycyl lysine isopeptide (Lys-Gly) (interchain with G-Cter in SUMO2)). The Myb-like domain occupies 128–188 (QRHAGRIAFT…SLKDRYLKHL (61 aa)). Residues serine 154 and serine 156 each carry the phosphoserine modification. Lysine 194 participates in a covalent cross-link: Glycyl lysine isopeptide (Lys-Gly) (interchain with G-Cter in SUMO2). 2 disordered regions span residues 196–244 (LLGD…EEIQ) and 264–311 (VVVD…QPEV). Phosphoserine is present on residues serine 203 and serine 206. Residues lysine 208, lysine 212, and lysine 240 each participate in a glycyl lysine isopeptide (Lys-Gly) (interchain with G-Cter in SUMO2) cross-link. The span at 280-304 (CDDDPPTPEEDSETQPDEEEEEEEE) shows a compositional bias: acidic residues. Lysine 372 is covalently cross-linked (Glycyl lysine isopeptide (Lys-Gly) (interchain with G-Cter in SUMO2)). The short motif at 383–399 (KKFGAQNVARRIEFRKK) is the Nuclear localization signal element.

Belongs to the RAP1 family. As to quaternary structure, associates with the I-kappa-B-kinase (IKK) core complex, composed of CHUK, IKBKB and IKBKG. Homodimer. Component of the shelterin complex (telosome) composed of TERF1, TERF2, TINF2, TERF2IP ACD and POT1. Interacts with TERF2; the interaction is direct. Does not interact with TERF1. Interacts with SLX4/BTBD12. In terms of tissue distribution, ubiquitous. Highly expressed.

It is found in the nucleus. The protein resides in the cytoplasm. Its subcellular location is the chromosome. The protein localises to the telomere. Functionally, acts both as a regulator of telomere function and as a transcription regulator. Involved in the regulation of telomere length and protection as a component of the shelterin complex (telosome). In contrast to other components of the shelterin complex, it is dispensible for telomere capping and does not participate in the protection of telomeres against non-homologous end-joining (NHEJ)-mediated repair. Instead, it is required to negatively regulate telomere recombination and is essential for repressing homology-directed repair (HDR), which can affect telomere length. Does not bind DNA directly: recruited to telomeric double-stranded 5'-TTAGGG-3' repeats via its interaction with TERF2. Independently of its function in telomeres, also acts as a transcription regulator: recruited to extratelomeric 5'-TTAGGG-3' sites via its association with TERF2 or other factors, and regulates gene expression. When cytoplasmic, associates with the I-kappa-B-kinase (IKK) complex and acts as a regulator of the NF-kappa-B signaling by promoting IKK-mediated phosphorylation of RELA/p65, leading to activate expression of NF-kappa-B target genes. This chain is Telomeric repeat-binding factor 2-interacting protein 1 (TERF2IP), found in Homo sapiens (Human).